A 180-amino-acid chain; its full sequence is ATP-dependent protease subunit HslV (180 aa).

Residue Thr9 is part of the active site. Residues Ala164, Cys167, and Thr170 each contribute to the Na(+) site.

It belongs to the peptidase T1B family. HslV subfamily. In terms of assembly, a double ring-shaped homohexamer of HslV is capped on each side by a ring-shaped HslU homohexamer. The assembly of the HslU/HslV complex is dependent on binding of ATP.

The protein localises to the cytoplasm. It catalyses the reaction ATP-dependent cleavage of peptide bonds with broad specificity.. Its activity is regulated as follows. Allosterically activated by HslU binding. Protease subunit of a proteasome-like degradation complex believed to be a general protein degrading machinery. The sequence is that of ATP-dependent protease subunit HslV from Leptospira borgpetersenii serovar Hardjo-bovis (strain JB197).